We begin with the raw amino-acid sequence, 400 residues long: CCA-adding enzyme (400 aa).

ATP is bound by residues G32 and R35. G32 and R35 together coordinate CTP. The Mg(2+) site is built by D45 and D47. R116, D159, R162, R165, and R168 together coordinate ATP. CTP is bound by residues R116, D159, R162, R165, and R168.

It belongs to the tRNA nucleotidyltransferase/poly(A) polymerase family. Bacterial CCA-adding enzyme type 3 subfamily. Homodimer. The cofactor is Mg(2+).

The enzyme catalyses a tRNA precursor + 2 CTP + ATP = a tRNA with a 3' CCA end + 3 diphosphate. It catalyses the reaction a tRNA with a 3' CCA end + 2 CTP + ATP = a tRNA with a 3' CCACCA end + 3 diphosphate. In terms of biological role, catalyzes the addition and repair of the essential 3'-terminal CCA sequence in tRNAs without using a nucleic acid template. Adds these three nucleotides in the order of C, C, and A to the tRNA nucleotide-73, using CTP and ATP as substrates and producing inorganic pyrophosphate. tRNA 3'-terminal CCA addition is required both for tRNA processing and repair. Also involved in tRNA surveillance by mediating tandem CCA addition to generate a CCACCA at the 3' terminus of unstable tRNAs. While stable tRNAs receive only 3'-terminal CCA, unstable tRNAs are marked with CCACCA and rapidly degraded. The chain is CCA-adding enzyme from Limosilactobacillus fermentum (strain NBRC 3956 / LMG 18251) (Lactobacillus fermentum).